Consider the following 2528-residue polypeptide: Squalestatin tetraketide synthase clz2 (2528 aa).

In terms of domain architecture, Ketosynthase family 3 (KS3) spans 14–409; that stretch reads TVPIAIVGMS…GANAHVILES (396 aa). Residues Cys187, His291, and His331 each act as for beta-ketoacyl synthase activity in the active site. Residues 420 to 457 form a disordered region; that stretch reads VNGHHQKNGTTNGHKGANGTTNELNGTNGTANGHDITT. Low complexity predominate over residues 436 to 452; that stretch reads ANGTTNELNGTNGTANG. A malonyl-CoA:ACP transacylase (MAT) domain region spans residues 538-856; sequence GAQWFAMGRE…PYLSCLLRGQ (319 aa). The N-terminal hotdog fold stretch occupies residues 925–1063; it reads HDLLGSLIPG…GRIAIELDTS (139 aa). The 315-residue stretch at 925–1239 folds into the PKS/mFAS DH domain; the sequence is HDLLGSLIPG…NQSVGQIALQ (315 aa). The tract at residues 925 to 1239 is dehydratase (DH) domain; sequence HDLLGSLIPG…NQSVGQIALQ (315 aa). The active-site Proton acceptor; for dehydratase activity is His957. Residues 1083–1239 form a C-terminal hotdog fold region; it reads TRSVDPSNLY…NQSVGQIALQ (157 aa). The active-site Proton donor; for dehydratase activity is the Asp1148. The methyltransferase (CMet) domain stretch occupies residues 1390–1590; the sequence is LYRYYTDAIK…GLDVELRDCD (201 aa). The segment at 1817–2130 is enoyl reductase (ER) (ER) domain; it reads GLIDTLQFSK…AGKHMGKIVI (314 aa). Positions 2153 to 2331 are ketoreductase (KR) domain; the sequence is ASYLIVGGLG…AVSIDLGMVQ (179 aa). A disordered region spans residues 2408–2430; sequence RARDAKEQSNSQGGGTDSKISPG. The region spanning 2441 to 2518 is the Carrier domain; the sequence is EAIDVVGRAI…ALATTVATKS (78 aa). At Ser2478 the chain carries O-(pantetheine 4'-phosphoryl)serine.

Its pathway is secondary metabolite biosynthesis. In terms of biological role, highly reducing polyketide synthase (HR-PKS); part of the gene cluster that mediates the biosynthesis of squalestatin S1 (SQS1, also known as zaragozic acid A), a heavily oxidized fungal polyketide that offers potent cholesterol lowering activity by targeting squalene synthase (SS). SQS1 is composed of a 2,8-dioxobicyclic[3.2.1]octane-3,4,5-tricarboxyclic acid core that is connected to two lipophilic polyketide arms. These initial steps feature the priming of an unusual benzoic acid starter unit onto the highly reducing polyketide synthase clz14, followed by oxaloacetate extension and product release to generate a tricarboxylic acid containing product. The phenylalanine ammonia lyase (PAL) clz10 and the acyl-CoA ligase clz12 are involved in transforming phenylalanine into benzoyl-CoA. The citrate synthase-like protein clz17 is involved in connecting the C-alpha-carbons of the hexaketide chain and oxaloacetate to afford the tricarboxylic acid unit. The potential hydrolytic enzymes, clz11 and clz13, are in close proximity to pks2 and may participate in product release. On the other side, the tetraketide arm is synthesized by a the squalestatin tetraketide synthase clz2 and enzymatically esterified to the core in the last biosynthetic step, by the acetyltransferase clz6. The biosynthesis of the tetraketide must involve 3 rounds of chain extension. After the first and second rounds methyl-transfer occurs, and in all rounds of extension the ketoreductase and dehydratase are active. The enoyl reductase and C-MeT of clz2 are not active in the final round of extension. The acetyltransferase clz6 appears to have a broad substrate selectivity for its acyl CoA substrate, allowing the in vitro synthesis of novel squalestatins. The biosynthesis of SQS1 requires several oxidative steps likely performed by oxidoreductases clz3, clz15 and clz16. Finally, in support of the identification of the cluster as being responsible for SQS1 production, the cluster contains a gene encoding a putative squalene synthase (SS) clz20, suggesting a likely mechanism for self-resistance. This chain is Squalestatin tetraketide synthase clz2, found in Cochliobolus lunatus (Filamentous fungus).